The chain runs to 330 residues: Free fatty acid receptor 2 (330 aa).

Over 1–8 the chain is Extracellular; the sequence is MTPDWHSS. The helical transmembrane segment at 9–29 threads the bilayer; that stretch reads LILTAYILIFLTGLPANLLAL. The Cytoplasmic segment spans residues 30 to 43; the sequence is RAFVSRVRQPQPAP. Residues 44 to 64 form a helical membrane-spanning segment; it reads VHILLLNLTLADLLLLLLLPF. The Extracellular portion of the chain corresponds to 65–79; the sequence is RIVEAASNFRWYLPK. Residues 80-100 traverse the membrane as a helical segment; that stretch reads IVCALTGFGFYSSIYCSTWLL. Residues 101–126 lie on the Cytoplasmic side of the membrane; sequence AGISIERYLGVAFPVQYKLSRRPLYG. Residues 127 to 147 traverse the membrane as a helical segment; the sequence is VIAALVAWIMSFGHCTIVIIV. At 148-184 the chain is on the extracellular side; the sequence is QYLNSTEQVGTENQITCYENFTQAQLDVVLPVRLELC. Asn-151 and Asn-167 each carry an N-linked (GlcNAc...) asparagine glycan. The helical transmembrane segment at 185–205 threads the bilayer; sequence LVLFFVPMTVTIFCYWRFVWI. At 206–219 the chain is on the cytoplasmic side; sequence MLTQPHVGAQRRRR. Residues 220-240 traverse the membrane as a helical segment; the sequence is AVGLAVVTLLNFLVCFGPYNM. The Extracellular portion of the chain corresponds to 241–255; that stretch reads SHLVGFHLRQSPSWR. A helical membrane pass occupies residues 256 to 276; it reads VEAVVFSSLNASLDPLLFYFS. At 277 to 330 the chain is on the cytoplasmic side; that stretch reads SSVVRRAFGKGLLLLRNPGSSMLGRGAEETVEGTKTDRGGSQTEGAQSSDFVTE. The disordered stretch occupies residues 300 to 330; sequence GRGAEETVEGTKTDRGGSQTEGAQSSDFVTE. Over residues 302 to 314 the composition is skewed to basic and acidic residues; that stretch reads GAEETVEGTKTDR. A compositionally biased stretch (polar residues) spans 315-330; it reads GGSQTEGAQSSDFVTE.

The protein belongs to the G-protein coupled receptor 1 family. In terms of assembly, interacts with FCN1 (via Fibrinogen C-terminal domain). Detected in whole wall and separated mucosa in the distal ileum and colon. Expressed by enteroendocrine cells expressing peptide YY (PYY) (at protein level).

It is found in the cell membrane. Its function is as follows. G protein-coupled receptor that is activated by a major product of dietary fiber digestion, the short chain fatty acids (SCFAs), and that plays a role in the regulation of whole-body energy homeostasis and in intestinal immunity. In omnivorous mammals, the short chain fatty acids acetate, propionate and butyrate are produced primarily by the gut microbiome that metabolizes dietary fibers. SCFAs serve as a source of energy but also act as signaling molecules. That G protein-coupled receptor is probably coupled to the pertussis toxin-sensitive, G(i/o)-alpha family of G proteins but also to the Gq family. Its activation results in the formation of inositol 1,4,5-trisphosphate, the mobilization of intracellular calcium, the phosphorylation of the MAPK3/ERK1 and MAPK1/ERK2 kinases and the inhibition of intracellular cAMP accumulation. May play a role in glucose homeostasis by regulating the secretion of GLP-1, in response to short-chain fatty acids accumulating in the intestine. May also regulate the production of LEP/Leptin, a hormone acting on the central nervous system to inhibit food intake. Finally, may also regulate whole-body energy homeostasis through adipogenesis regulating both differentiation and lipid storage of adipocytes. In parallel to its role in energy homeostasis, may also mediate the activation of the inflammatory and immune responses by SCFA in the intestine, regulating the rapid production of chemokines and cytokines. May also play a role in the resolution of the inflammatory response and control chemotaxis in neutrophils. In addition to SCFAs, may also be activated by the extracellular lectin FCN1 in a process leading to activation of monocytes and inducing the secretion of interleukin-8/IL-8 in response to the presence of microbes. This Rattus norvegicus (Rat) protein is Free fatty acid receptor 2 (Ffar2).